The primary structure comprises 452 residues: Trigger factor (452 aa).

Residues 171–256 (GDRVTLAFKG…ATLIEAPQDA (86 aa)) enclose the PPIase FKBP-type domain.

Belongs to the FKBP-type PPIase family. Tig subfamily.

It localises to the cytoplasm. The catalysed reaction is [protein]-peptidylproline (omega=180) = [protein]-peptidylproline (omega=0). Functionally, involved in protein export. Acts as a chaperone by maintaining the newly synthesized protein in an open conformation. Functions as a peptidyl-prolyl cis-trans isomerase. This is Trigger factor from Afipia carboxidovorans (strain ATCC 49405 / DSM 1227 / KCTC 32145 / OM5) (Oligotropha carboxidovorans).